Reading from the N-terminus, the 910-residue chain is Protein translocase subunit SecA (910 aa).

Residues Gln89, 107-111, and Asp496 contribute to the ATP site; that span reads GEGKT. Residues 873 to 910 form a disordered region; sequence QEFSGGNLNRSQSNGSSVTVTTSSGGGTERKTSRRRKR. The span at 876-886 shows a compositional bias: polar residues; sequence SGGNLNRSQSN.

This sequence belongs to the SecA family. In terms of assembly, monomer and homodimer. Part of the essential Sec protein translocation apparatus which comprises SecA, SecYEG and auxiliary proteins SecDF. Other proteins may also be involved.

It is found in the cell inner membrane. The protein localises to the cytoplasm. The enzyme catalyses ATP + H2O + cellular proteinSide 1 = ADP + phosphate + cellular proteinSide 2.. Part of the Sec protein translocase complex. Interacts with the SecYEG preprotein conducting channel. Has a central role in coupling the hydrolysis of ATP to the transfer of proteins into and across the cell membrane, serving as an ATP-driven molecular motor driving the stepwise translocation of polypeptide chains across the membrane. The protein is Protein translocase subunit SecA of Leptospira interrogans serogroup Icterohaemorrhagiae serovar copenhageni (strain Fiocruz L1-130).